We begin with the raw amino-acid sequence, 212 residues long: Large ribosomal subunit protein uL3 (212 aa).

The residue at position 153 (Gln153) is an N5-methylglutamine.

Belongs to the universal ribosomal protein uL3 family. Part of the 50S ribosomal subunit. Forms a cluster with proteins L14 and L19. Methylated by PrmB.

Functionally, one of the primary rRNA binding proteins, it binds directly near the 3'-end of the 23S rRNA, where it nucleates assembly of the 50S subunit. This chain is Large ribosomal subunit protein uL3, found in Shewanella piezotolerans (strain WP3 / JCM 13877).